A 204-amino-acid polypeptide reads, in one-letter code: Prephenate decarboxylase (204 aa).

Belongs to the prephenate decarboxylase family.

The protein resides in the cytoplasm. The enzyme catalyses prephenate + H(+) = 3-[(4R)-4-hydroxycyclohexa-1,5-dien-1-yl]-2-oxopropanoate + CO2. It functions in the pathway antibiotic biosynthesis; bacilysin biosynthesis. Functionally, part of the bacABCDEF operon responsible for the biosynthesis of the nonribosomally synthesized dipeptide antibiotic bacilysin, composed of L-alanine and L-anticapsin. Bacilysin is an irreversible inactivator of the glutaminase domain of glucosamine synthetase. BacA is an unusual prephenate decarboxylase that avoids the typical aromatization of the cyclohexadienol ring of prephenate. BacA catalyzes the protonation of prephenate (1-carboxy-4-hydroxy-alpha-oxo-2,5-cyclohexadiene-1-propanoic acid) at C6 position, followed by a decarboxylation to produce the endocyclic-delta(4),delta(8)-7R-dihydro-hydroxyphenylpyruvate (en-H2HPP). En-H2HPP is able to undergo a slow nonenzymatic isomerization to produce the exocyclic-delta(3),delta(5)-dihydro-hydroxyphenylpyruvate (ex-H2HPP). BacA isomerizes only the pro-R double bond in prephenate. This is Prephenate decarboxylase from Bacillus subtilis.